We begin with the raw amino-acid sequence, 526 residues long: NAD(P)H-quinone oxidoreductase subunit 2 (526 aa).

The next 14 helical transmembrane spans lie at 16 to 36 (ILPESIVILTLIVVLVGDLIV), 43 to 63 (WIPYAAIAGLLGSVFALYLGW), 80 to 100 (LSILFRGIIVLSTAFTIMMSV), 107 to 127 (GTALSEFICILLTATLGGMFL), 133 to 153 (LVMIFVSLEMLSISSYLLTGY), 168 to 188 (LLIGAASSAIFLYGVSLLYGL), 211 to 231 (LALAIALVFAIAGIAFKISAV), 245 to 265 (PTPVVAFLSVGSKAAGFALAI), 279 to 299 (WHFIFTALAILSMVLGNVVAL), 307 to 327 (MLAYSSIAQAGFVMIGLVAGT), 335 to 355 (IFYLLVYLFMNLGAFTCVILF), 379 to 399 (LGLSVCLLSLGGIPPLAGFFG), 401 to 421 (IYLFWAGWQAGLYGLVLLGLI), and 469 to 489 (LVLSVIITSLAGILSNPLFVI).

This sequence belongs to the complex I subunit 2 family. NDH-1 can be composed of about 15 different subunits; different subcomplexes with different compositions have been identified which probably have different functions.

Its subcellular location is the cellular thylakoid membrane. The enzyme catalyses a plastoquinone + NADH + (n+1) H(+)(in) = a plastoquinol + NAD(+) + n H(+)(out). It carries out the reaction a plastoquinone + NADPH + (n+1) H(+)(in) = a plastoquinol + NADP(+) + n H(+)(out). In terms of biological role, NDH-1 shuttles electrons from an unknown electron donor, via FMN and iron-sulfur (Fe-S) centers, to quinones in the respiratory and/or the photosynthetic chain. The immediate electron acceptor for the enzyme in this species is believed to be plastoquinone. Couples the redox reaction to proton translocation, and thus conserves the redox energy in a proton gradient. Cyanobacterial NDH-1 also plays a role in inorganic carbon-concentration. In Picosynechococcus sp. (strain ATCC 27264 / PCC 7002 / PR-6) (Agmenellum quadruplicatum), this protein is NAD(P)H-quinone oxidoreductase subunit 2.